The following is a 356-amino-acid chain: S-adenosylmethionine:tRNA ribosyltransferase-isomerase (356 aa).

It belongs to the QueA family. Monomer.

It is found in the cytoplasm. The enzyme catalyses 7-aminomethyl-7-carbaguanosine(34) in tRNA + S-adenosyl-L-methionine = epoxyqueuosine(34) in tRNA + adenine + L-methionine + 2 H(+). It functions in the pathway tRNA modification; tRNA-queuosine biosynthesis. In terms of biological role, transfers and isomerizes the ribose moiety from AdoMet to the 7-aminomethyl group of 7-deazaguanine (preQ1-tRNA) to give epoxyqueuosine (oQ-tRNA). The protein is S-adenosylmethionine:tRNA ribosyltransferase-isomerase of Shigella boydii serotype 18 (strain CDC 3083-94 / BS512).